A 70-amino-acid chain; its full sequence is Gas vesicle protein A (70 aa).

The protein belongs to the gas vesicle GvpA family. The gas vesicle shell is 2 nm thick and consists of a single layer of this protein. It forms helical ribs nearly perpendicular to the long axis of the vesicle.

It localises to the gas vesicle shell. Its function is as follows. Gas vesicles are hollow, gas filled proteinaceous nanostructures found in some microorganisms. During planktonic growth they allow positioning of the organism at a favorable depth for light or nutrient acquisition. GvpA forms the protein shell. The chain is Gas vesicle protein A from Cereibacter sphaeroides (strain ATCC 17023 / DSM 158 / JCM 6121 / CCUG 31486 / LMG 2827 / NBRC 12203 / NCIMB 8253 / ATH 2.4.1.) (Rhodobacter sphaeroides).